A 206-amino-acid chain; its full sequence is Large ribosomal subunit protein uL4 (206 aa).

The disordered stretch occupies residues 62 to 85 (KPWRQKGTGRARQGSTRSPQFRGG).

The protein belongs to the universal ribosomal protein uL4 family. As to quaternary structure, part of the 50S ribosomal subunit.

Functionally, one of the primary rRNA binding proteins, this protein initially binds near the 5'-end of the 23S rRNA. It is important during the early stages of 50S assembly. It makes multiple contacts with different domains of the 23S rRNA in the assembled 50S subunit and ribosome. In terms of biological role, forms part of the polypeptide exit tunnel. This Rhodospirillum centenum (strain ATCC 51521 / SW) protein is Large ribosomal subunit protein uL4.